The primary structure comprises 119 residues: Small ribosomal subunit protein uS13 (119 aa).

The tract at residues 90-119 is disordered; sequence IRHRRGLPLRGQRTRSNARTRKGKRKPIRS. Over residues 91-119 the composition is skewed to basic residues; it reads RHRRGLPLRGQRTRSNARTRKGKRKPIRS.

It belongs to the universal ribosomal protein uS13 family. In terms of assembly, part of the 30S ribosomal subunit. Forms a loose heterodimer with protein S19. Forms two bridges to the 50S subunit in the 70S ribosome.

Its function is as follows. Located at the top of the head of the 30S subunit, it contacts several helices of the 16S rRNA. In the 70S ribosome it contacts the 23S rRNA (bridge B1a) and protein L5 of the 50S subunit (bridge B1b), connecting the 2 subunits; these bridges are implicated in subunit movement. Contacts the tRNAs in the A and P-sites. The protein is Small ribosomal subunit protein uS13 of Coxiella burnetii (strain CbuK_Q154) (Coxiella burnetii (strain Q154)).